The primary structure comprises 191 residues: Shikimate kinase (191 aa).

An ATP-binding site is contributed by 24-29 (GSGKTS). A Mg(2+)-binding site is contributed by T28. Residues D46, R70, and G92 each contribute to the substrate site. Residue R130 participates in ATP binding. R149 contacts substrate.

This sequence belongs to the shikimate kinase family. In terms of assembly, monomer. Requires Mg(2+) as cofactor.

It is found in the cytoplasm. It carries out the reaction shikimate + ATP = 3-phosphoshikimate + ADP + H(+). It participates in metabolic intermediate biosynthesis; chorismate biosynthesis; chorismate from D-erythrose 4-phosphate and phosphoenolpyruvate: step 5/7. Catalyzes the specific phosphorylation of the 3-hydroxyl group of shikimic acid using ATP as a cosubstrate. The polypeptide is Shikimate kinase (Parasynechococcus marenigrum (strain WH8102)).